Consider the following 195-residue polypeptide: Putative C-P lyase subunit protein HtxG (195 aa).

The protein belongs to the PhnH family.

Its function is as follows. Belongs to an operon involved in hypophosphite oxidation. Exact function not known. This is Putative C-P lyase subunit protein HtxG (htxG) from Stutzerimonas stutzeri (Pseudomonas stutzeri).